Reading from the N-terminus, the 663-residue chain is DNA ligase (663 aa).

NAD(+)-binding positions include D33–D37, S82–I83, and E112. K114 serves as the catalytic N6-AMP-lysine intermediate. The NAD(+) site is built by R135, E171, K285, and K309. Residues C403, C406, C419, and C424 each coordinate Zn(2+). A BRCT domain is found at D581–S663.

This sequence belongs to the NAD-dependent DNA ligase family. LigA subfamily. Mg(2+) is required as a cofactor. Requires Mn(2+) as cofactor.

The enzyme catalyses NAD(+) + (deoxyribonucleotide)n-3'-hydroxyl + 5'-phospho-(deoxyribonucleotide)m = (deoxyribonucleotide)n+m + AMP + beta-nicotinamide D-nucleotide.. Functionally, DNA ligase that catalyzes the formation of phosphodiester linkages between 5'-phosphoryl and 3'-hydroxyl groups in double-stranded DNA using NAD as a coenzyme and as the energy source for the reaction. It is essential for DNA replication and repair of damaged DNA. This chain is DNA ligase, found in Chlamydia trachomatis serovar D (strain ATCC VR-885 / DSM 19411 / UW-3/Cx).